The primary structure comprises 145 residues: Nucleoside diphosphate kinase (145 aa).

The ATP site is built by lysine 11, phenylalanine 59, arginine 87, threonine 93, arginine 104, and asparagine 114. Histidine 117 serves as the catalytic Pros-phosphohistidine intermediate.

It belongs to the NDK family. Mg(2+) serves as cofactor.

The protein resides in the cytoplasm. It catalyses the reaction a 2'-deoxyribonucleoside 5'-diphosphate + ATP = a 2'-deoxyribonucleoside 5'-triphosphate + ADP. It carries out the reaction a ribonucleoside 5'-diphosphate + ATP = a ribonucleoside 5'-triphosphate + ADP. Functionally, major role in the synthesis of nucleoside triphosphates other than ATP. The ATP gamma phosphate is transferred to the NDP beta phosphate via a ping-pong mechanism, using a phosphorylated active-site intermediate. The sequence is that of Nucleoside diphosphate kinase from Sulfolobus acidocaldarius (strain ATCC 33909 / DSM 639 / JCM 8929 / NBRC 15157 / NCIMB 11770).